The sequence spans 462 residues: Phosphoglucosamine mutase (462 aa).

Serine 111 serves as the catalytic Phosphoserine intermediate. 4 residues coordinate Mg(2+): serine 111, aspartate 250, aspartate 252, and aspartate 254. A Phosphoserine modification is found at serine 111.

The protein belongs to the phosphohexose mutase family. Mg(2+) serves as cofactor. Post-translationally, activated by phosphorylation.

It carries out the reaction alpha-D-glucosamine 1-phosphate = D-glucosamine 6-phosphate. Its function is as follows. Catalyzes the conversion of glucosamine-6-phosphate to glucosamine-1-phosphate. This chain is Phosphoglucosamine mutase, found in Synechococcus sp. (strain WH7803).